We begin with the raw amino-acid sequence, 345 residues long: Uroporphyrinogen decarboxylase (345 aa).

Substrate is bound by residues 28 to 32 (RQAGR), Asp77, Tyr152, Ser207, and His321.

It belongs to the uroporphyrinogen decarboxylase family. As to quaternary structure, homodimer.

Its subcellular location is the cytoplasm. It catalyses the reaction uroporphyrinogen III + 4 H(+) = coproporphyrinogen III + 4 CO2. The protein operates within porphyrin-containing compound metabolism; protoporphyrin-IX biosynthesis; coproporphyrinogen-III from 5-aminolevulinate: step 4/4. Catalyzes the decarboxylation of four acetate groups of uroporphyrinogen-III to yield coproporphyrinogen-III. The chain is Uroporphyrinogen decarboxylase from Arthrobacter sp. (strain FB24).